The sequence spans 291 residues: Tyrosine isonitrile desaturase (291 aa).

His-110, Asp-112, and His-259 together coordinate Fe cation.

Belongs to the TfdA dioxygenase family. As to quaternary structure, homotrimer in solution. It depends on Fe(2+) as a cofactor.

It catalyses the reaction (2S)-3-(4-hydroxyphenyl)-2-isocyanopropanoate + 2-oxoglutarate + O2 = (2E)-3-(4-hydroxyphenyl)-2-isocyanoprop-2-enoate + succinate + CO2 + H2O. Involved in the biosynthesis of paerucumarin, a cyclized isocyano derivative of tyrosine. Catalyzes the 2-oxoglutarate-dependent oxidation of tyrosine isonitrile. This chain is Tyrosine isonitrile desaturase, found in Pseudomonas aeruginosa (strain ATCC 15692 / DSM 22644 / CIP 104116 / JCM 14847 / LMG 12228 / 1C / PRS 101 / PAO1).